The chain runs to 435 residues: Glutamine synthetase (435 aa).

In terms of domain architecture, GS beta-grasp spans 12–94; sequence KGVKYFMISY…VAADCIMDDA (83 aa). In terms of domain architecture, GS catalytic spans 100 to 435; sequence PRVVLKKLVA…EWEHQTTLDV (336 aa). 4 residues coordinate Mg(2+): Glu123, Glu125, Glu180, and Glu187. Gly232 provides a ligand contact to L-glutamate. Residue His236 coordinates Mg(2+). Ser240 contributes to the ATP binding site. 2 residues coordinate L-glutamate: Arg291 and Arg315. ATP is bound by residues Arg315 and Arg320. Residue Glu328 coordinates Mg(2+). Position 330 (Arg330) interacts with L-glutamate.

Belongs to the glutamine synthetase family. In terms of assembly, homooctamer. The cofactor is Mg(2+).

The catalysed reaction is L-glutamate + NH4(+) + ATP = L-glutamine + ADP + phosphate + H(+). Its activity is regulated as follows. Inhibited by methionine sulfoximine, ADP and pyrophosphate, but not by various nitrogen-containing metabolites that inhibit other GS enzymes. Functionally, catalyzes the ATP-dependent biosynthesis of glutamine from glutamate and ammonia. This chain is Glutamine synthetase, found in Rhizobium meliloti (strain 1021) (Ensifer meliloti).